Consider the following 550-residue polypeptide: Arginine--tRNA ligase (550 aa).

The 'HIGH' region signature appears at 130–140 (ANPTGPIHIGG).

This sequence belongs to the class-I aminoacyl-tRNA synthetase family. In terms of assembly, monomer.

The protein localises to the cytoplasm. It catalyses the reaction tRNA(Arg) + L-arginine + ATP = L-arginyl-tRNA(Arg) + AMP + diphosphate. The polypeptide is Arginine--tRNA ligase (Mycobacterium marinum (strain ATCC BAA-535 / M)).